A 198-amino-acid chain; its full sequence is NADH-quinone oxidoreductase subunit C (198 aa).

This sequence belongs to the complex I 30 kDa subunit family. NDH-1 is composed of 14 different subunits. Subunits NuoB, C, D, E, F, and G constitute the peripheral sector of the complex.

It localises to the cell inner membrane. It catalyses the reaction a quinone + NADH + 5 H(+)(in) = a quinol + NAD(+) + 4 H(+)(out). Its function is as follows. NDH-1 shuttles electrons from NADH, via FMN and iron-sulfur (Fe-S) centers, to quinones in the respiratory chain. The immediate electron acceptor for the enzyme in this species is believed to be ubiquinone. Couples the redox reaction to proton translocation (for every two electrons transferred, four hydrogen ions are translocated across the cytoplasmic membrane), and thus conserves the redox energy in a proton gradient. This chain is NADH-quinone oxidoreductase subunit C, found in Janthinobacterium sp. (strain Marseille) (Minibacterium massiliensis).